The following is a 359-amino-acid chain: Fructose-bisphosphate aldolase, cytoplasmic isozyme 2 (359 aa).

Arginine 52 and lysine 143 together coordinate substrate. Glutamate 184 acts as the Proton acceptor in catalysis. Residue lysine 226 is the Schiff-base intermediate with dihydroxyacetone-P of the active site.

It belongs to the class I fructose-bisphosphate aldolase family.

It is found in the cytoplasm. It catalyses the reaction beta-D-fructose 1,6-bisphosphate = D-glyceraldehyde 3-phosphate + dihydroxyacetone phosphate. Its pathway is carbohydrate degradation; glycolysis; D-glyceraldehyde 3-phosphate and glycerone phosphate from D-glucose: step 4/4. The protein is Fructose-bisphosphate aldolase, cytoplasmic isozyme 2 of Pisum sativum (Garden pea).